The following is a 156-amino-acid chain: 6,7-dimethyl-8-ribityllumazine synthase (156 aa).

5-amino-6-(D-ribitylamino)uracil is bound by residues Phe22, 56–58, and 80–82; these read AFE and AVV. (2S)-2-hydroxy-3-oxobutyl phosphate is bound at residue 85–86; it reads ET. Residue His88 is the Proton donor of the active site. Phe113 is a 5-amino-6-(D-ribitylamino)uracil binding site. Arg127 contributes to the (2S)-2-hydroxy-3-oxobutyl phosphate binding site.

Belongs to the DMRL synthase family.

The enzyme catalyses (2S)-2-hydroxy-3-oxobutyl phosphate + 5-amino-6-(D-ribitylamino)uracil = 6,7-dimethyl-8-(1-D-ribityl)lumazine + phosphate + 2 H2O + H(+). The protein operates within cofactor biosynthesis; riboflavin biosynthesis; riboflavin from 2-hydroxy-3-oxobutyl phosphate and 5-amino-6-(D-ribitylamino)uracil: step 1/2. In terms of biological role, catalyzes the formation of 6,7-dimethyl-8-ribityllumazine by condensation of 5-amino-6-(D-ribitylamino)uracil with 3,4-dihydroxy-2-butanone 4-phosphate. This is the penultimate step in the biosynthesis of riboflavin. This chain is 6,7-dimethyl-8-ribityllumazine synthase, found in Pediococcus pentosaceus (strain ATCC 25745 / CCUG 21536 / LMG 10740 / 183-1w).